The chain runs to 427 residues: Mitochondrial distribution and morphology protein 10 (427 aa).

A compositionally biased stretch (low complexity) spans 393 to 414 (SSYANSQATAGAQGSSGGPPTS). Positions 393-427 (SSYANSQATAGAQGSSGGPPTSYWRGVGVSVSYSS) are disordered.

This sequence belongs to the MDM10 family. Component of the ER-mitochondria encounter structure (ERMES) or MDM complex, composed of mmm1, mdm10, mdm12 and mdm34. Associates with the mitochondrial outer membrane sorting assembly machinery SAM(core) complex.

It is found in the mitochondrion outer membrane. In terms of biological role, component of the ERMES/MDM complex, which serves as a molecular tether to connect the endoplasmic reticulum and mitochondria. Components of this complex are involved in the control of mitochondrial shape and protein biogenesis and may function in phospholipid exchange. mdm10 is involved in the late assembly steps of the general translocase of the mitochondrial outer membrane (TOM complex). Functions in the tom40-specific route of the assembly of outer membrane beta-barrel proteins, including the association of tom40 with the receptor tom22 and small TOM proteins. Can associate with the SAM(core) complex as well as the mdm12-mmm1 complex, both involved in late steps of the major beta-barrel assembly pathway, that is responsible for biogenesis of all outer membrane beta-barrel proteins. May act as a switch that shuttles between both complexes and channels precursor proteins into the tom40-specific pathway. Plays a role in mitochondrial morphology and in the inheritance of mitochondria. The sequence is that of Mitochondrial distribution and morphology protein 10 (mdmB) from Emericella nidulans (strain FGSC A4 / ATCC 38163 / CBS 112.46 / NRRL 194 / M139) (Aspergillus nidulans).